We begin with the raw amino-acid sequence, 266 residues long: 3-methyl-2-oxobutanoate hydroxymethyltransferase 2 (266 aa).

Residues Asp45 and Asp84 each contribute to the Mg(2+) site. Residues 45–46 (DS), Asp84, and Lys112 contribute to the 3-methyl-2-oxobutanoate site. Mg(2+) is bound at residue Glu114. Residue Glu181 is the Proton acceptor of the active site.

This sequence belongs to the PanB family. As to quaternary structure, homodecamer; pentamer of dimers. Mg(2+) is required as a cofactor.

The protein localises to the cytoplasm. The catalysed reaction is 3-methyl-2-oxobutanoate + (6R)-5,10-methylene-5,6,7,8-tetrahydrofolate + H2O = 2-dehydropantoate + (6S)-5,6,7,8-tetrahydrofolate. It participates in cofactor biosynthesis; (R)-pantothenate biosynthesis; (R)-pantoate from 3-methyl-2-oxobutanoate: step 1/2. In terms of biological role, catalyzes the reversible reaction in which hydroxymethyl group from 5,10-methylenetetrahydrofolate is transferred onto alpha-ketoisovalerate to form ketopantoate. The sequence is that of 3-methyl-2-oxobutanoate hydroxymethyltransferase 2 from Pseudomonas aeruginosa (strain UCBPP-PA14).